A 210-amino-acid chain; its full sequence is MADS-box protein AGL42 (210 aa).

Residues 1-61 form the MADS-box domain; the sequence is MVRGKIEMKK…GRLYEFSSSD (61 aa). The K-box domain maps to 87-177; the sequence is LQQLKQEASH…HQKNVINPWR (91 aa).

As to expression, expressed in quiescent center (QC) cells of root tips. Expressed at the base of the petiole of cotyledons and leaves, in flower buds, petals, sepals and abscission zone of flowers and siliques.

The protein resides in the nucleus. In terms of biological role, MADS-box transcription factor that acts with AGL71 and AGL72 in the control of flowering time. Promotes flowering at the shoot apical and axillary meristems. Seems to act through a gibberellin-dependent pathway. Interacts genetically with SOC1 and its expression is directly regulated by SOC1. Plays a role in controlling flower organ senescence and abscission by repressing ethylene responses and regulating the expression of BOP2 and IDA. The sequence is that of MADS-box protein AGL42 (AGL42) from Arabidopsis thaliana (Mouse-ear cress).